The primary structure comprises 339 residues: DNA-directed RNA polymerase subunit alpha (339 aa).

The tract at residues 1–235 (MTIQKNWQEL…DQLNVFVNFE (235 aa)) is alpha N-terminal domain (alpha-NTD). Residues 251 to 339 (FNPAFLKKVD…ELAKRFEDHY (89 aa)) form an alpha C-terminal domain (alpha-CTD) region.

Belongs to the RNA polymerase alpha chain family. Homodimer. The RNAP catalytic core consists of 2 alpha, 1 beta, 1 beta' and 1 omega subunit. When a sigma factor is associated with the core the holoenzyme is formed, which can initiate transcription.

It catalyses the reaction RNA(n) + a ribonucleoside 5'-triphosphate = RNA(n+1) + diphosphate. DNA-dependent RNA polymerase catalyzes the transcription of DNA into RNA using the four ribonucleoside triphosphates as substrates. This chain is DNA-directed RNA polymerase subunit alpha, found in Afipia carboxidovorans (strain ATCC 49405 / DSM 1227 / KCTC 32145 / OM5) (Oligotropha carboxidovorans).